Consider the following 192-residue polypeptide: Ion-translocating oxidoreductase complex subunit A (192 aa).

The next 6 membrane-spanning stretches (helical) occupy residues leucine 5–leucine 25, isoleucine 39–valine 59, leucine 65–valine 85, alanine 102–leucine 122, alanine 134–methionine 154, and alanine 171–valine 191.

It belongs to the NqrDE/RnfAE family. In terms of assembly, the complex is composed of six subunits: RnfA, RnfB, RnfC, RnfD, RnfE and RnfG.

Its subcellular location is the cell inner membrane. Its function is as follows. Part of a membrane-bound complex that couples electron transfer with translocation of ions across the membrane. This Shewanella sp. (strain MR-4) protein is Ion-translocating oxidoreductase complex subunit A.